We begin with the raw amino-acid sequence, 61 residues long: Sperm protamine P1 (61 aa).

A disordered region spans residues 1–61 (MARYRHSRSR…RRYSRRRRRY (61 aa)).

It belongs to the protamine P1 family. In terms of tissue distribution, testis.

The protein localises to the nucleus. It is found in the chromosome. Functionally, protamines substitute for histones in the chromatin of sperm during the haploid phase of spermatogenesis. They compact sperm DNA into a highly condensed, stable and inactive complex. The polypeptide is Sperm protamine P1 (PRM1) (Potorous longipes (Long-footed potoroo)).